A 183-amino-acid polypeptide reads, in one-letter code: DELTA-miturgitoxin-Cp1a (183 aa).

The N-terminal stretch at 1–20 (MKFSLFFSVFFLAVLHACLS) is a signal peptide. A propeptide spanning residues 21–47 (ESEIDLEDEEHFMSSDSFLSEIQDESR) is cleaved from the precursor. Residues 44–47 (DESR) carry the Processing quadruplet motif motif. 8 disulfide bridges follow: C51–C66, C58–C75, C65–C88, C77–C86, C115–C130, C122–C139, C129–C157, and C141–C155. Domain repeat units follow at residues 51–77 (CIERNKECTNDRHGCCRGKIFKDKCTC) and 115–141 (CVPKHADCSKRKDDCCKGGIFKYQCKC). Positions 51–141 (CIERNKECTN…GGIFKYQCKC (91 aa)) are 2 X approximate repeats with cysteine pattern C-C-CC-C-C. The interval 164 to 177 (QAIEGALRIAKKLI) is predicted alpha-helix. A Tryptophan amide modification is found at W181.

This sequence belongs to the neurotoxin 19 (CSTX) family. Double-CSTX subfamily. Post-translationally, cleavage of the propeptide depends on the processing quadruplet motif (XXXR, with at least one of X being E). Expressed by the venom gland.

Its subcellular location is the secreted. The protein resides in the target cell membrane. Spider venom toxin that exhibits cytolytic activity by forming an alpha-helix across the membrane. Lethal to insect larvae. Causes instant paralysis and death in the larvae of the flesh fly (S.carnaria) at doses of 20 ug/g, at doses of less than 10 ug/g causes reversible paralysis. Has cytolytic activity against insect Sf9 cells. Causes stable and irreversible depolarization of fly muscle fibers, leading to contracture at higher toxin concentrations. Destabilizes membranes. The chain is DELTA-miturgitoxin-Cp1a from Cheiracanthium punctorium (Yellow sac spider).